The sequence spans 345 residues: Homeobox-leucine zipper protein HOX16 (345 aa).

The segment at residues 76–135 is a DNA-binding region (homeobox); sequence LPEKKRRLTPEQVHLLERSFEEENKLEPERKTELARKLGLQPRQVAVWFQNRRARWKTKQ. The tract at residues 134–178 is leucine-zipper; the sequence is KQLERDFDRLKASFDALRADHDALLQDNHRLHSQVMSLTEKLQEK. The interval 220 to 241 is disordered; it reads FEEQQEQQVKAEDRLSTGSGGS.

Belongs to the HD-ZIP homeobox family. Class I subfamily. Expressed in seedlings, stems, leaf sheaths and blades and panicles.

The protein localises to the nucleus. In terms of biological role, probable transcription factor. This chain is Homeobox-leucine zipper protein HOX16 (HOX16), found in Oryza sativa subsp. indica (Rice).